The primary structure comprises 21 residues: Preblooming protein 2 (21 aa).

Functionally, possible mediator for cell division in the blooming process. The polypeptide is Preblooming protein 2 (Prorocentrum triestinum (Red tide alga)).